Consider the following 752-residue polypeptide: Zinc finger protein 425 (752 aa).

Positions 9–80 (VTFDDVALYF…EQGCLDKTRR (72 aa)) constitute a KRAB domain. 19 C2H2-type zinc fingers span residues 190 to 212 (YSCY…KRSH), 246 to 268 (FQCS…QVVH), 274 to 296 (YPCP…LCLH), 302 to 324 (FCCG…LRLH), 330 to 352 (FQCP…LTQH), 358 to 380 (FHCP…QRTH), 386 to 408 (FSCG…IRVH), 414 to 436 (FSCP…GLQH), 442 to 464 (FQCP…QRLH), 470 to 492 (FPCA…TRVH), 498 to 520 (FPCG…LKVH), 526 to 548 (FSCA…TRLH), 554 to 576 (FQCP…QRMH), 582 to 604 (FACG…LRLH), 610 to 632 (YQCP…LLQH), 638 to 660 (FSCV…IRVH), 666 to 688 (FQCP…LYKH), 694 to 716 (FQCP…LCLH), and 722 to 744 (FSCD…IAVH).

This sequence belongs to the krueppel C2H2-type zinc-finger protein family.

It is found in the nucleus. It localises to the cytoplasm. Functionally, acts as a transcriptional repressor. This Homo sapiens (Human) protein is Zinc finger protein 425 (ZNF425).